The primary structure comprises 90 residues: DNA-binding protein HU-alpha (90 aa).

This sequence belongs to the bacterial histone-like protein family. In terms of assembly, heterodimer of an alpha and a beta chain.

Histone-like DNA-binding protein which is capable of wrapping DNA to stabilize it, and thus to prevent its denaturation under extreme environmental conditions. The chain is DNA-binding protein HU-alpha (hupA) from Pseudomonas aeruginosa (strain ATCC 15692 / DSM 22644 / CIP 104116 / JCM 14847 / LMG 12228 / 1C / PRS 101 / PAO1).